The chain runs to 419 residues: L-rhamnose isomerase (419 aa).

3 residues coordinate Mn(2+): histidine 262, aspartate 294, and aspartate 296.

This sequence belongs to the rhamnose isomerase family. Homotetramer. Mn(2+) serves as cofactor.

Its subcellular location is the cytoplasm. It catalyses the reaction L-rhamnopyranose = L-rhamnulose. Its pathway is carbohydrate degradation; L-rhamnose degradation; glycerone phosphate from L-rhamnose: step 1/3. Functionally, catalyzes the interconversion of L-rhamnose and L-rhamnulose. This chain is L-rhamnose isomerase, found in Shigella flexneri.